A 100-amino-acid polypeptide reads, in one-letter code: Aspartyl/glutamyl-tRNA(Asn/Gln) amidotransferase subunit C (100 aa).

The protein belongs to the GatC family. Heterotrimer of A, B and C subunits.

The catalysed reaction is L-glutamyl-tRNA(Gln) + L-glutamine + ATP + H2O = L-glutaminyl-tRNA(Gln) + L-glutamate + ADP + phosphate + H(+). It carries out the reaction L-aspartyl-tRNA(Asn) + L-glutamine + ATP + H2O = L-asparaginyl-tRNA(Asn) + L-glutamate + ADP + phosphate + 2 H(+). Its function is as follows. Allows the formation of correctly charged Asn-tRNA(Asn) or Gln-tRNA(Gln) through the transamidation of misacylated Asp-tRNA(Asn) or Glu-tRNA(Gln) in organisms which lack either or both of asparaginyl-tRNA or glutaminyl-tRNA synthetases. The reaction takes place in the presence of glutamine and ATP through an activated phospho-Asp-tRNA(Asn) or phospho-Glu-tRNA(Gln). The polypeptide is Aspartyl/glutamyl-tRNA(Asn/Gln) amidotransferase subunit C (Rickettsia bellii (strain OSU 85-389)).